A 432-amino-acid polypeptide reads, in one-letter code: 23S rRNA (uracil(1939)-C(5))-methyltransferase RlmD (432 aa).

In terms of domain architecture, TRAM spans 1-54 (MNPVVDILSLDHEGHGVARLDGKVTFVDGALAGERAEIAIFRKHAKYNSANAVA). 4 residues coordinate [4Fe-4S] cluster: C67, C73, C76, and C155. S-adenosyl-L-methionine is bound by residues Q264, F293, N298, E314, N341, and D362. The active-site Nucleophile is C389.

Belongs to the class I-like SAM-binding methyltransferase superfamily. RNA M5U methyltransferase family. RlmD subfamily.

It catalyses the reaction uridine(1939) in 23S rRNA + S-adenosyl-L-methionine = 5-methyluridine(1939) in 23S rRNA + S-adenosyl-L-homocysteine + H(+). Functionally, catalyzes the formation of 5-methyl-uridine at position 1939 (m5U1939) in 23S rRNA. The sequence is that of 23S rRNA (uracil(1939)-C(5))-methyltransferase RlmD from Thiobacillus denitrificans (strain ATCC 25259 / T1).